The chain runs to 387 residues: 1,3-propanediol dehydrogenase (387 aa).

This sequence belongs to the iron-containing alcohol dehydrogenase family. As to quaternary structure, homooctamer. The cofactor is Fe cation.

It catalyses the reaction propane-1,3-diol + NAD(+) = 3-hydroxypropanal + NADH + H(+). The chain is 1,3-propanediol dehydrogenase (dhaT) from Klebsiella pneumoniae.